The chain runs to 266 residues: Putative carbamate hydrolase RutD (266 aa).

The AB hydrolase-1 domain maps to 14–115 (PVVVLISGLG…TMLVSVNGWL (102 aa)).

This sequence belongs to the AB hydrolase superfamily. Hydrolase RutD family.

It carries out the reaction carbamate + 2 H(+) = NH4(+) + CO2. Functionally, involved in pyrimidine catabolism. May facilitate the hydrolysis of carbamate, a reaction that can also occur spontaneously. This is Putative carbamate hydrolase RutD from Shigella flexneri serotype X (strain 2002017).